The following is a 309-amino-acid chain: 1,4-dihydroxy-2-naphthoyl-CoA synthase (309 aa).

Residues Arg-53, 98 to 102, Tyr-110, 152 to 156, Thr-179, Ser-185, Tyr-282, and Lys-297 each bind substrate; these read SGGDQ and WAAGG.

Belongs to the enoyl-CoA hydratase/isomerase family. MenB subfamily.

The catalysed reaction is 2-succinylbenzoyl-CoA + H(+) = 1,4-dihydroxy-2-naphthoyl-CoA + H2O. It participates in quinol/quinone metabolism; 1,4-dihydroxy-2-naphthoate biosynthesis; 1,4-dihydroxy-2-naphthoate from chorismate: step 6/7. The protein operates within quinol/quinone metabolism; menaquinone biosynthesis. In terms of biological role, converts o-succinylbenzoyl-CoA (OSB-CoA) to 1,4-dihydroxy-2-naphthoyl-CoA (DHNA-CoA). The protein is 1,4-dihydroxy-2-naphthoyl-CoA synthase of Mycolicibacterium smegmatis (strain ATCC 700084 / mc(2)155) (Mycobacterium smegmatis).